The chain runs to 194 residues: Peptidyl-tRNA hydrolase (194 aa).

Tyr-17 is a tRNA binding site. His-22 acts as the Proton acceptor in catalysis. TRNA-binding residues include Tyr-68, Asn-70, and Asn-116.

Belongs to the PTH family. As to quaternary structure, monomer.

Its subcellular location is the cytoplasm. It carries out the reaction an N-acyl-L-alpha-aminoacyl-tRNA + H2O = an N-acyl-L-amino acid + a tRNA + H(+). In terms of biological role, hydrolyzes ribosome-free peptidyl-tRNAs (with 1 or more amino acids incorporated), which drop off the ribosome during protein synthesis, or as a result of ribosome stalling. Its function is as follows. Catalyzes the release of premature peptidyl moieties from peptidyl-tRNA molecules trapped in stalled 50S ribosomal subunits, and thus maintains levels of free tRNAs and 50S ribosomes. In Pseudomonas entomophila (strain L48), this protein is Peptidyl-tRNA hydrolase.